Reading from the N-terminus, the 399-residue chain is Chorismate synthase (399 aa).

NADP(+) is bound by residues Arg40 and Arg46. FMN contacts are provided by residues 129 to 131, 257 to 258, Gly302, 317 to 321, and Arg343; these read RSS, QA, and KPISS.

The protein belongs to the chorismate synthase family. Homotetramer. FMNH2 serves as cofactor.

It catalyses the reaction 5-O-(1-carboxyvinyl)-3-phosphoshikimate = chorismate + phosphate. It functions in the pathway metabolic intermediate biosynthesis; chorismate biosynthesis; chorismate from D-erythrose 4-phosphate and phosphoenolpyruvate: step 7/7. In terms of biological role, catalyzes the anti-1,4-elimination of the C-3 phosphate and the C-6 proR hydrogen from 5-enolpyruvylshikimate-3-phosphate (EPSP) to yield chorismate, which is the branch point compound that serves as the starting substrate for the three terminal pathways of aromatic amino acid biosynthesis. This reaction introduces a second double bond into the aromatic ring system. The polypeptide is Chorismate synthase (Chlorobium chlorochromatii (strain CaD3)).